Reading from the N-terminus, the 310-residue chain is Proline dehydrogenase (310 aa).

Substrate is bound at residue lysine 98. Aspartate 135 is a catalytic residue. Residues methionine 136, glutamine 166, 187 to 192 (RMVKGA), 229 to 230 (TH), and 292 to 295 (RIAE) each bind FAD. Arginine 187 is a catalytic residue. Residue 291–292 (RR) coordinates substrate.

This sequence belongs to the proline dehydrogenase family. The cofactor is FAD.

It catalyses the reaction L-proline + a quinone = (S)-1-pyrroline-5-carboxylate + a quinol + H(+). It functions in the pathway amino-acid degradation; L-proline degradation into L-glutamate; L-glutamate from L-proline: step 1/2. Its function is as follows. Converts proline to delta-1-pyrroline-5-carboxylate. The polypeptide is Proline dehydrogenase (Deinococcus radiodurans (strain ATCC 13939 / DSM 20539 / JCM 16871 / CCUG 27074 / LMG 4051 / NBRC 15346 / NCIMB 9279 / VKM B-1422 / R1)).